The following is a 136-amino-acid chain: Large ribosomal subunit protein uL16 (136 aa).

This sequence belongs to the universal ribosomal protein uL16 family. In terms of assembly, part of the 50S ribosomal subunit.

Binds 23S rRNA and is also seen to make contacts with the A and possibly P site tRNAs. In Citrobacter koseri (strain ATCC BAA-895 / CDC 4225-83 / SGSC4696), this protein is Large ribosomal subunit protein uL16.